The primary structure comprises 430 residues: MIOREX complex component 4 (430 aa).

A mitochondrion-targeting transit peptide spans 1 to 27; the sequence is MTVLYTSASLKKMKCLAFNMGMNCVRT. A helical transmembrane segment spans residues 403–420; it reads FLISLSALLASFFAYYRY.

In terms of assembly, associates with the mitochondrial ribosome.

The protein localises to the mitochondrion. It localises to the mitochondrion membrane. Its function is as follows. Component of MIOREX complexes, large expressome-like assemblies of ribosomes with factors involved in all the steps of post-transcriptional gene expression. The sequence is that of MIOREX complex component 4 from Saccharomyces cerevisiae (strain ATCC 204508 / S288c) (Baker's yeast).